Here is a 300-residue protein sequence, read N- to C-terminus: tRNA pseudouridine synthase B (300 aa).

The Nucleophile role is filled by Asp-41.

It belongs to the pseudouridine synthase TruB family. Type 1 subfamily.

It catalyses the reaction uridine(55) in tRNA = pseudouridine(55) in tRNA. Responsible for synthesis of pseudouridine from uracil-55 in the psi GC loop of transfer RNAs. This is tRNA pseudouridine synthase B from Synechococcus sp. (strain WH7803).